Reading from the N-terminus, the 286-residue chain is Nucleotide-binding protein APL_0334 (286 aa).

8–15 lines the ATP pocket; it reads GRSGSGKS. Residue 56–59 participates in GTP binding; sequence DIRN.

Belongs to the RapZ-like family.

Functionally, displays ATPase and GTPase activities. The polypeptide is Nucleotide-binding protein APL_0334 (Actinobacillus pleuropneumoniae serotype 5b (strain L20)).